Reading from the N-terminus, the 151-residue chain is UPF0756 membrane protein Dred_1097 (151 aa).

Transmembrane regions (helical) follow at residues 6-26 (IILLSLILMGYLAESALLATA), 52-72 (VGLIFLMLSVLVPLAHDNIVY), 75-95 (LVMKTLSPQGLLALIGGTLAT), and 111-131 (LIFGMVIGSLIGIVFLGGIPI).

Belongs to the UPF0756 family.

It is found in the cell membrane. This Desulforamulus reducens (strain ATCC BAA-1160 / DSM 100696 / MI-1) (Desulfotomaculum reducens) protein is UPF0756 membrane protein Dred_1097.